We begin with the raw amino-acid sequence, 1216 residues long: Sodium/potassium/calcium exchanger 1 (1216 aa).

The Extracellular segment spans residues 1–446 (MGKLIRMGAQ…DLFSVEERRQ (446 aa)). Residues 94-196 (EATAGRDGTP…KYSPSPLGRM (103 aa)) form a disordered region. 2 stretches are compositionally biased toward polar residues: residues 110 to 135 (NTPSTPRGTASITPAIPNNYSPTPTG) and 144 to 166 (SATPSGVLNHYTQSRPMVNSYTR). Residues N290 and N303 are each glycosylated (N-linked (GlcNAc...) asparagine). The helical transmembrane segment at 447-467 (GWVVLHIFGMMYVFVALAIVC) threads the bilayer. Residues 468–491 (DEYFVPALGVITDKLQISEDVAGA) lie on the Cytoplasmic side of the membrane. One copy of the Alpha-1 repeat lies at 488–528 (VAGATFMAAGGSAPELFTSLIGVFISHSNVGIGTIVGSAVF). A helical membrane pass occupies residues 492–512 (TFMAAGGSAPELFTSLIGVFI). At 513-518 (SHSNVG) the chain is on the extracellular side. Residues 519–539 (IGTIVGSAVFNILFVIGTCAL) form a helical membrane-spanning segment. At 540 to 557 (FSREILNLTWWPLFRDIT) the chain is on the cytoplasmic side. The helical transmembrane segment at 558 to 578 (FYIFDLMMLILFFLDSLIAWW) threads the bilayer. Position 579 (E579) is a topological domain, extracellular. The chain crosses the membrane as a helical span at residues 580–600 (SVLLLLAYAFYVFTMKWNQQL). Topologically, residues 601-1024 (ELWVKEQLNK…SLEWPETRRK (424 aa)) are cytoplasmic. At S652 the chain carries Phosphoserine. The tract at residues 677–1018 (GEARPSKDKE…ENEQPLSLEW (342 aa)) is disordered. A compositionally biased stretch (basic and acidic residues) spans 702-712 (AESKPEEEPAK). Position 717 is a phosphothreonine (T717). Residues 796 to 811 (DEDEGEIQAEGGEVKG) form a 1; approximate repeat. Positions 796 to 928 (DEDEGEIQAE…QAGEAGEVEG (133 aa)) are 8 X 17 AA tandem repeats of D-E-D-E-G-E-I-Q-A-G-E-[GA]-G-E-V-[EK]-G. 6 tandem repeats follow at residues 812–828 (DEDEGEIQAGEGGEVEG), 829–845 (DEDEGEIQAGEGGEVEG), 846–862 (DEDEGEIQAGEAGEVEG), 863–879 (DEDEGEIQAGEGGEVEG), 880–896 (DEDEGEIQAGEAGEVEG), and 897–913 (DEDEGEIQAGEGGEVKG). Composition is skewed to acidic residues over residues 824–834 (GEVEGDEDEGE), 841–851 (GEVEGDEDEGE), 858–868 (GEVEGDEDEGE), 875–885 (GEVEGDEDEGE), 892–902 (GEVEGDEDEGE), 924–941 (GEVEGEDGEVEGGEDEGE), and 981–1011 (GDSEDEEEEDEEEEDEEEEEEEEEEEEEENE). The stretch at 914–928 (DEGEIQAGEAGEVEG) is one 8; approximate repeat. A helical membrane pass occupies residues 1025-1045 (QAIYLFLLPIVFPLWLTVPDV). Over 1046 to 1052 (RRLEAKK) the chain is Extracellular. A helical membrane pass occupies residues 1053–1073 (FFVITFLGSILWIAMFSYLMV). Residues 1074-1088 (WWAHQVGETIGISEE) are Cytoplasmic-facing. Residues 1089–1109 (IMGLTILAAGTSIPDLITSVI) form a helical membrane-spanning segment. One copy of the Alpha-2 repeat lies at 1096–1127 (AAGTSIPDLITSVIVARKGLGDMAVSSSVGSN). At 1110 to 1127 (VARKGLGDMAVSSSVGSN) the chain is on the extracellular side. The helical transmembrane segment at 1128-1148 (IFDITVGLPLPWMLFSLINGL) threads the bilayer. The Cytoplasmic portion of the chain corresponds to 1149 to 1157 (QPVAVSSNG). A helical transmembrane segment spans residues 1158–1178 (LFCAIVLLFLMLLFVISSIAL). At 1179 to 1185 (CKWRMNK) the chain is on the extracellular side. A helical transmembrane segment spans residues 1186–1206 (ILGFTMFLLYFVFLIISVMLE). The Cytoplasmic segment spans residues 1207–1216 (DRIISCPVSV).

Belongs to the Ca(2+):cation antiporter (CaCA) (TC 2.A.19) family. SLC24A subfamily. Post-translationally, the uncleaved signal sequence is required for efficient membrane targeting and proper membrane integration and topology. Glycosylated. Retina.

Its subcellular location is the cell membrane. It carries out the reaction Ca(2+)(out) + K(+)(out) + 4 Na(+)(in) = Ca(2+)(in) + K(+)(in) + 4 Na(+)(out). Calcium, potassium:sodium antiporter that transports 1 Ca(2+) and 1 K(+) in exchange for 4 Na(+). Critical component of the visual transduction cascade, controlling the calcium concentration of outer segments during light and darkness. Light causes a rapid lowering of cytosolic free calcium in the outer segment of both retinal rod and cone photoreceptors and the light-induced lowering of calcium is caused by extrusion via this protein which plays a key role in the process of light adaptation. The protein is Sodium/potassium/calcium exchanger 1 (SLC24A1) of Bos taurus (Bovine).